The following is a 126-amino-acid chain: Aspartate 1-decarboxylase (126 aa).

S25 acts as the Schiff-base intermediate with substrate; via pyruvic acid in catalysis. S25 is subject to Pyruvic acid (Ser). T57 is a binding site for substrate. Y58 functions as the Proton donor in the catalytic mechanism. 73–75 (GGA) provides a ligand contact to substrate.

The protein belongs to the PanD family. As to quaternary structure, heterooctamer of four alpha and four beta subunits. The cofactor is pyruvate. Post-translationally, is synthesized initially as an inactive proenzyme, which is activated by self-cleavage at a specific serine bond to produce a beta-subunit with a hydroxyl group at its C-terminus and an alpha-subunit with a pyruvoyl group at its N-terminus.

It localises to the cytoplasm. It catalyses the reaction L-aspartate + H(+) = beta-alanine + CO2. It functions in the pathway cofactor biosynthesis; (R)-pantothenate biosynthesis; beta-alanine from L-aspartate: step 1/1. In terms of biological role, catalyzes the pyruvoyl-dependent decarboxylation of aspartate to produce beta-alanine. This is Aspartate 1-decarboxylase from Xylella fastidiosa (strain 9a5c).